The following is an 83-amino-acid chain: Translational regulator CsrA (83 aa).

The protein belongs to the CsrA/RsmA family. In terms of assembly, homodimer; the beta-strands of each monomer intercalate to form a hydrophobic core, while the alpha-helices form wings that extend away from the core.

It localises to the cytoplasm. In terms of biological role, a translational regulator that binds mRNA to regulate translation initiation and/or mRNA stability. Usually binds in the 5'-UTR at or near the Shine-Dalgarno sequence preventing ribosome-binding, thus repressing translation. Its main target seems to be the major flagellin gene, while its function is anatagonized by FliW. This chain is Translational regulator CsrA, found in Thermotoga petrophila (strain ATCC BAA-488 / DSM 13995 / JCM 10881 / RKU-1).